We begin with the raw amino-acid sequence, 90 residues long: Small ribosomal subunit protein bS20 (90 aa).

The segment at 1 to 25 (MANSPSAKKRAKQAEKRRSHNASLR) is disordered. Residues 7 to 20 (AKKRAKQAEKRRSH) are compositionally biased toward basic residues.

This sequence belongs to the bacterial ribosomal protein bS20 family.

Binds directly to 16S ribosomal RNA. The chain is Small ribosomal subunit protein bS20 from Pseudomonas fluorescens (strain Pf0-1).